Consider the following 774-residue polypeptide: Beta-D-xylosidase 1 (774 aa).

The first 30 residues, 1–30, serve as a signal peptide directing secretion; it reads MSCYNKALLIGNKVVVILVFLLCLVHSSES. An N-linked (GlcNAc...) asparagine glycan is attached at Asn-131. Asp-296 is a catalytic residue. N-linked (GlcNAc...) asparagine glycosylation occurs at Asn-658.

The protein belongs to the glycosyl hydrolase 3 family. As to expression, expressed in leaves, stems, seedlings, roots, inflorescences, siliques and developing seeds. Expressed in the vasculature of the roots, leaves, flowers and silique. Expressed in tissues undergoing secondary cell wall thickening such as protoxylem, metaxylem, intrafascicular cambium and fibers.

It localises to the secreted. It is found in the extracellular space. The protein localises to the extracellular matrix. The enzyme catalyses Hydrolysis of terminal non-reducing alpha-L-arabinofuranoside residues in alpha-L-arabinosides.. Functionally, involved in pectic arabinan modification in mucilage secretory cells. Also acts as a beta-D-xylosidase during the remodeling of xylans in vascular development. The chain is Beta-D-xylosidase 1 (BXL1) from Arabidopsis thaliana (Mouse-ear cress).